The primary structure comprises 66 residues: Nigrocin-2ISa (66 aa).

The first 22 residues, 1–22 (MFTLKKSMLLLFFLGTINLSLC), serve as a signal peptide directing secretion. A propeptide spans 23-43 (QEERDAEEERRDEDNAKMEEI) (removed in mature form). Residues C60 and C66 are joined by a disulfide bond.

In terms of tissue distribution, expressed by the skin glands.

The protein resides in the secreted. Has antimicrobial activity against Gram-negative bacterium E.coli ATCC 8739 (MIC=25 ug), against Gram positive bacteria S.aureus ATCC 6538 (MIC=3.1 ug), methicillin-resistant S.aureus ATCC 43300 (MIC=12.5 ug), B.subtilis ATCC 6633 (MIC=12.5 ug) and against fungus C.albicans ATCC 90028 (MIC=50 ug). The chain is Nigrocin-2ISa from Odorrana ishikawae (Ishikawa's frog).